We begin with the raw amino-acid sequence, 95 residues long: Aspartyl/glutamyl-tRNA(Asn/Gln) amidotransferase subunit C (95 aa).

Belongs to the GatC family. In terms of assembly, heterotrimer of A, B and C subunits.

It carries out the reaction L-glutamyl-tRNA(Gln) + L-glutamine + ATP + H2O = L-glutaminyl-tRNA(Gln) + L-glutamate + ADP + phosphate + H(+). It catalyses the reaction L-aspartyl-tRNA(Asn) + L-glutamine + ATP + H2O = L-asparaginyl-tRNA(Asn) + L-glutamate + ADP + phosphate + 2 H(+). Functionally, allows the formation of correctly charged Asn-tRNA(Asn) or Gln-tRNA(Gln) through the transamidation of misacylated Asp-tRNA(Asn) or Glu-tRNA(Gln) in organisms which lack either or both of asparaginyl-tRNA or glutaminyl-tRNA synthetases. The reaction takes place in the presence of glutamine and ATP through an activated phospho-Asp-tRNA(Asn) or phospho-Glu-tRNA(Gln). The protein is Aspartyl/glutamyl-tRNA(Asn/Gln) amidotransferase subunit C of Methylococcus capsulatus (strain ATCC 33009 / NCIMB 11132 / Bath).